A 397-amino-acid chain; its full sequence is Stearoyl-[acyl-carrier-protein] 9-desaturase, chloroplastic (397 aa).

A chloroplast-targeting transit peptide spans 1–33 (MALNFNAIASKSQKLPCFALPPKATLRSPKFSM). Fe cation contacts are provided by E138, E176, H179, E229, E262, and H265.

Belongs to the fatty acid desaturase type 2 family. Homodimer. The cofactor is Fe(2+).

It is found in the plastid. It localises to the chloroplast. The enzyme catalyses octadecanoyl-[ACP] + 2 reduced [2Fe-2S]-[ferredoxin] + O2 + 2 H(+) = (9Z)-octadecenoyl-[ACP] + 2 oxidized [2Fe-2S]-[ferredoxin] + 2 H2O. The protein operates within lipid metabolism; fatty acid metabolism. Converts stearoyl-ACP to oleoyl-ACP by introduction of a cis double bond between carbons 9 and 10 of the acyl chain. The chain is Stearoyl-[acyl-carrier-protein] 9-desaturase, chloroplastic from Gossypium hirsutum (Upland cotton).